Consider the following 500-residue polypeptide: Vitamin D(3) 25-hydroxylase (500 aa).

Cys446 is a binding site for heme.

Belongs to the cytochrome P450 family. It depends on heme as a cofactor. As to expression, found in liver and kidney.

The protein resides in the endoplasmic reticulum membrane. Its subcellular location is the microsome membrane. The catalysed reaction is calciol + reduced [NADPH--hemoprotein reductase] + O2 = calcidiol + oxidized [NADPH--hemoprotein reductase] + H2O + H(+). It carries out the reaction alfacalcidol + reduced [NADPH--hemoprotein reductase] + O2 = calcitriol + oxidized [NADPH--hemoprotein reductase] + H2O + H(+). The enzyme catalyses dodecanoate + reduced [NADPH--hemoprotein reductase] + O2 = 12-hydroxydodecanoate + oxidized [NADPH--hemoprotein reductase] + H2O + H(+). It catalyses the reaction dodecanoate + reduced [NADPH--hemoprotein reductase] + O2 = 11-hydroxydodecanoate + oxidized [NADPH--hemoprotein reductase] + H2O + H(+). The catalysed reaction is 5beta-cholestane-3alpha,7alpha-diol + reduced [NADPH--hemoprotein reductase] + O2 = 5beta-cholestane-3alpha,7alpha,25-triol + oxidized [NADPH--hemoprotein reductase] + H2O + H(+). It carries out the reaction 5beta-cholestane-3alpha,7alpha,12alpha-triol + reduced [NADPH--hemoprotein reductase] + O2 = 5beta-cholestane-3alpha,7alpha,12alpha,25-tetrol + oxidized [NADPH--hemoprotein reductase] + H2O + H(+). Functionally, catalyzes the 25-hydroxylation of vitamin D(3) (calciol), 1alpha-hydroxyvitamin D(3) (alphacalcidiol) and some C27 steroids. In addition the enzyme catalyzes the hydroxylation of positions 11 and 12 of dodecanoate. This chain is Vitamin D(3) 25-hydroxylase (CYP2D25), found in Sus scrofa (Pig).